Consider the following 57-residue polypeptide: Large ribosomal subunit protein bL32 (57 aa).

A disordered region spans residues 1–21 (MAVPKRRTSKKVKNQRRTHKK).

This sequence belongs to the bacterial ribosomal protein bL32 family.

This chain is Large ribosomal subunit protein bL32, found in Oceanobacillus iheyensis (strain DSM 14371 / CIP 107618 / JCM 11309 / KCTC 3954 / HTE831).